A 379-amino-acid chain; its full sequence is Acyl-CoA dehydrogenase, short-chain specific (379 aa).

This sequence belongs to the acyl-CoA dehydrogenase family. FAD serves as cofactor.

It catalyses the reaction butanoyl-CoA + oxidized [electron-transfer flavoprotein] + H(+) = (2E)-butenoyl-CoA + reduced [electron-transfer flavoprotein]. It carries out the reaction a short-chain 2,3-saturated fatty acyl-CoA + oxidized [electron-transfer flavoprotein] + H(+) = a short-chain (2E)-enoyl-CoA + reduced [electron-transfer flavoprotein]. Its pathway is lipid metabolism; butanoate metabolism. The chain is Acyl-CoA dehydrogenase, short-chain specific (bcd) from Clostridium acetobutylicum (strain ATCC 824 / DSM 792 / JCM 1419 / IAM 19013 / LMG 5710 / NBRC 13948 / NRRL B-527 / VKM B-1787 / 2291 / W).